The following is a 256-amino-acid chain: Methylesterase 9 (256 aa).

Catalysis depends on Ser-78, which acts as the Acyl-ester intermediate. Catalysis depends on charge relay system residues Asp-206 and His-234.

It belongs to the AB hydrolase superfamily. Methylesterase family.

The catalysed reaction is methyl (indol-3-yl)acetate + H2O = (indol-3-yl)acetate + methanol + H(+). The enzyme catalyses methyl (-)-jasmonate + H2O = jasmonate + methanol + H(+). It catalyses the reaction methyl salicylate + H2O = salicylate + methanol + H(+). The protein operates within plant hormone biosynthesis. It functions in the pathway lipid metabolism; oxylipin biosynthesis. Esterase activity is down-regulated by salicylic acid (SA). Its function is as follows. Methylesterase shown to have carboxylesterase activity, methyl indole-3-acetic acid (MeIAA) esterase activity, methyl salicylate (MeSA) esterase activity and methyl jasmonate (MeJA) esterase activity in vitro. Required to convert methyl salicylate (MeSA) to salicylic acid (SA) as part of the signal transduction pathways that activate systemic acquired resistance in systemic tissue. MeSA is believed to be an inactive form that needs to be demethylated to exert a biological effect. The polypeptide is Methylesterase 9 (Arabidopsis thaliana (Mouse-ear cress)).